Here is a 439-residue protein sequence, read N- to C-terminus: Proton pump-interactor 4 (439 aa).

Positions 286-354 (KEEKEIDEET…AKKKKAVCKS (69 aa)) form a coiled coil. The chain crosses the membrane as a helical span at residues 415-435 (LWVWTVSSAAVALPLALLVVF).

This sequence belongs to the plant Proton pump-interactor protein family.

The protein localises to the cell membrane. Its subcellular location is the endoplasmic reticulum membrane. Functionally, may regulate plasma membrane ATPase activity. The chain is Proton pump-interactor 4 (PPI4) from Arabidopsis thaliana (Mouse-ear cress).